The primary structure comprises 515 residues: ATP synthase subunit alpha (515 aa).

171 to 178 (GDRQTGKT) serves as a coordination point for ATP.

Belongs to the ATPase alpha/beta chains family. In terms of assembly, F-type ATPases have 2 components, CF(1) - the catalytic core - and CF(0) - the membrane proton channel. CF(1) has five subunits: alpha(3), beta(3), gamma(1), delta(1), epsilon(1). CF(0) has three main subunits: a(1), b(2) and c(9-12). The alpha and beta chains form an alternating ring which encloses part of the gamma chain. CF(1) is attached to CF(0) by a central stalk formed by the gamma and epsilon chains, while a peripheral stalk is formed by the delta and b chains.

The protein resides in the cell inner membrane. It catalyses the reaction ATP + H2O + 4 H(+)(in) = ADP + phosphate + 5 H(+)(out). In terms of biological role, produces ATP from ADP in the presence of a proton gradient across the membrane. The alpha chain is a regulatory subunit. This is ATP synthase subunit alpha from Xanthomonas axonopodis pv. citri (strain 306).